The chain runs to 276 residues: UPF0328 protein ECU04_0100 (276 aa).

Positions 1 to 24 (MGIIDVQRSHLTATPSKERDAPAH) are disordered.

The protein belongs to the UPF0328 family.

The chain is UPF0328 protein ECU04_0100 from Encephalitozoon cuniculi (strain GB-M1) (Microsporidian parasite).